Reading from the N-terminus, the 96-residue chain is uncharacterized protein (96 aa).

The HTH cro/C1-type domain maps to 38-91; the sequence is IEQLRKGTGLKIDDFARVLGVSVAMVKEWESRRVKPSSAELKLMRLIQANPALS. Positions 49-68 form a DNA-binding region, H-T-H motif; sequence IDDFARVLGVSVAMVKEWES.

This is an uncharacterized protein from Escherichia coli O157:H7.